Consider the following 742-residue polypeptide: Polyribonucleotide nucleotidyltransferase (742 aa).

The Mg(2+) site is built by Asp-515 and Asp-521. Positions Pro-581–Val-640 constitute a KH domain. Residues Gly-652–Val-724 enclose the S1 motif domain.

Belongs to the polyribonucleotide nucleotidyltransferase family. The cofactor is Mg(2+).

It localises to the cytoplasm. It carries out the reaction RNA(n+1) + phosphate = RNA(n) + a ribonucleoside 5'-diphosphate. Functionally, involved in mRNA degradation. Catalyzes the phosphorolysis of single-stranded polyribonucleotides processively in the 3'- to 5'-direction. This Nocardioides sp. (strain ATCC BAA-499 / JS614) protein is Polyribonucleotide nucleotidyltransferase.